A 1322-amino-acid polypeptide reads, in one-letter code: BRCA2-interacting transcriptional repressor EMSY (1322 aa).

The interaction with BRCA2 stretch occupies residues 1–478 (MPVVWPTLLD…LPKPVTATLP (478 aa)). An ENT domain is found at 16–100 (CKRILRKLEL…EWSIEGRRLV (85 aa)). Residues 104–108 (PRLVP) form an interaction with ZMYND11 region. The segment covering 148–162 (STTSTPTSTPVPSGS) has biased composition (low complexity). Disordered stretches follow at residues 148 to 178 (STTSTPTSTPVPSGSIATVKSPRPASPASNV) and 192 to 215 (VSCSDEDEKPRKRRRTNSSSSSPV). Thr-207 bears the Phosphothreonine mark. Phosphoserine occurs at positions 209 and 213. Ser-228 and Ser-236 each carry an O-linked (GlcNAc) serine glycan. The residue at position 238 (Ser-238) is a Phosphoserine. Thr-271 carries an O-linked (GlcNAc) threonine glycan. The span at 417–437 (QQTQQQVAQPSPVSHQQQPQQ) shows a compositional bias: low complexity. Residues 417-444 (QQTQQQVAQPSPVSHQQQPQQSPLPPGI) form a disordered region. Residues Thr-501 and Thr-506 are each glycosylated (O-linked (GlcNAc) threonine). Ser-557 is a glycosylation site (O-linked (GlcNAc) serine). Polar residues predominate over residues 698–707 (VAEAGNSSIQ). The interval 698–736 (VAEAGNSSIQEGKEEPQNYTDSSSSSTESSQSSQDSQPV) is disordered. A compositionally biased stretch (low complexity) spans 717 to 734 (TDSSSSSTESSQSSQDSQ). Ser-818 and Ser-821 each carry phosphoserine. An O-linked (GlcNAc) threonine glycan is attached at Thr-1120. Position 1136 is a phosphoserine (Ser-1136). Residues 1205–1223 (QKCRESCSSPSTVGSSLTT) are compositionally biased toward polar residues. Disordered regions lie at residues 1205–1231 (QKCRESCSSPSTVGSSLTTRKIDPPAV) and 1290–1322 (QLDDEETAMEQDIDSSTEDGTEPSPSQSSAERS). Acidic residues predominate over residues 1291 to 1310 (LDDEETAMEQDIDSSTEDGT). Residues 1312-1322 (PSPSQSSAERS) are compositionally biased toward polar residues.

Homodimer. Interacts with the transactivation domain of BRCA2. Interacts with CBX1 (via chromoshadow domain). Interacts with ZMYND11. Does not interact with CBX3 or CBX5. Component of a nuclear receptor-mediated transcription complex composed of at least ZNF335, CCAR2 and EMSY; the complex stimulates the transcription of nuclear receptor target genes such as SOX9 and HOXA1. Within the complex interacts with CCAR2 and ZNF335. Components of this complex may associate with components of a histone methylation complex to form a complex at least composed of ZNF335, HCFC1, CCAR2, EMSY, MKI67, RBBP5, ASH2L and WDR5. Within this complex, interacts with ASH2L and RBBP5. Post-translationally, O-glycosylated during cytokinesis at sites identical or close to phosphorylation sites, this interferes with the phosphorylation status.

Its subcellular location is the nucleus. Its function is as follows. Regulator which is able to repress transcription, possibly via its interaction with a multiprotein chromatin remodeling complex that modifies the chromatin. Its interaction with BRCA2 suggests that it may play a central role in the DNA repair function of BRCA2. Mediates ligand-dependent transcriptional activation by nuclear hormone receptors. The protein is BRCA2-interacting transcriptional repressor EMSY of Homo sapiens (Human).